Here is a 57-residue protein sequence, read N- to C-terminus: Large ribosomal subunit protein bL32 (57 aa).

The protein belongs to the bacterial ribosomal protein bL32 family.

This chain is Large ribosomal subunit protein bL32, found in Corynebacterium glutamicum (strain R).